We begin with the raw amino-acid sequence, 165 residues long: UBA-like domain-containing protein 2-B (165 aa).

Positions 119–165 are disordered; sequence QQPVWLPPASPTAHLHHHHHHPQPVWPPNSQPTGGPQKAMAAMDGQR.

The protein belongs to the UBALD family.

The polypeptide is UBA-like domain-containing protein 2-B (ubald2-b) (Xenopus laevis (African clawed frog)).